Consider the following 503-residue polypeptide: MDFPVNTRRMAGRRGFFSQYTHHHLAAFLLTFFSYSLLHASRKSFSNVKVSVSSQWTPSDLNSSAYIVLPNETWNGNTLFPNTKSATLFLGLLDTIFLFAYAVGLFISGIIGDRLNMRLVLTFGMCSSAITMFVFGTLTEWLQFYNKIFYCLVWIVNGLLQSTGWPCVVAIMGNWFGKSGRGFVFGLWSACASVGNILGAFLASSVLKYGYEYAFLVTASVQFAGGIIIFFGLVTSPKELGLPDTGEGEMDRAAQEEGANKPLIGGNDEGDDESNYSIQSDDVVITPKAIGFMQACCLPGVLLYSLAYACLKLVNYSFFFWLPYYLSNNFKWKEAEADQLSIWYDIGGIVGGTVQGLISDLMKMRSPVLTVSLLLAVGALFGYSHSPNDKVMNAFIMSITGFFIGGPSNMISSAISADLGRQEMVRGSSEALATVTGIVDGTGSIGAAMGQFLVPLIQNSLNWMWVFYFFIFMICMTTVFMVPLIVRETRDWLRQRRSSRLER.

The chain crosses the membrane as a helical span at residues 20-40 (YTHHHLAAFLLTFFSYSLLHA). Residues asparagine 62 and asparagine 71 are each glycosylated (N-linked (GlcNAc...) asparagine). 5 helical membrane passes run 87–107 (TLFL…GLFI), 119–139 (LVLT…GTLT), 152–172 (LVWI…VAIM), 183–203 (FVFG…AFLA), and 214–234 (AFLV…FGLV). An N-linked (GlcNAc...) asparagine glycan is attached at asparagine 275. 6 helical membrane passes run 300–322 (GVLL…FFWL), 342–362 (IWYD…SDLM), 367–387 (PVLT…SHSP), 395–415 (FIMS…SSAI), 437–457 (GIVD…VPLI), and 466–486 (VFYF…PLIV).

It belongs to the major facilitator superfamily. Organophosphate:Pi antiporter (OPA) (TC 2.A.1.4) family.

The protein localises to the endoplasmic reticulum membrane. It localises to the lysosome membrane. Unlike the other SLC37 members, seems to lack glucose-6-phosphate antiporter activity. The chain is Sugar phosphate exchanger 3 (slc37a3) from Xenopus laevis (African clawed frog).